Consider the following 544-residue polypeptide: Probable protein kinase UbiB (544 aa).

In terms of domain architecture, Protein kinase spans Asp-123–Leu-500. ATP contacts are provided by residues Leu-129 to Val-137 and Lys-152. The Proton acceptor role is filled by Asp-286. The next 2 helical transmembrane spans lie at Tyr-499 to Ser-519 and Met-522 to Gly-542.

Belongs to the ABC1 family. UbiB subfamily.

The protein resides in the cell inner membrane. Its pathway is cofactor biosynthesis; ubiquinone biosynthesis [regulation]. In terms of biological role, is probably a protein kinase regulator of UbiI activity which is involved in aerobic coenzyme Q (ubiquinone) biosynthesis. Required for the expression of 2'-N-acetyltransferase. This chain is Probable protein kinase UbiB, found in Providencia stuartii.